A 665-amino-acid chain; its full sequence is MRYQWRSLLFRSYRSSPRPFLSHHSRFQVISNSTRSFSSFLHERFGVQQRQCLFALRSPLASSVSRRFSSESAIEEKLPAETVVIDVFSRLNGKDEITKELDSNDVVISHELALRVLRELESSPDVAGRFFKWGLEAYPQKLSSKSYNTMLRIFGVNGLVDEFWRLVDDMKKKGHGVSANVRDRVGDKFKKDGLENDLERLKELFASGSMDNSVDKVCNRVCKIVMKEVWGADVEKQLRDLKLEFKSDVVKMVLEKLDVDPRKALLFFRWIDESGSFKHDEKTYNAMARVLGKEKFLDRFQHMIEEIRSAGYEMEMETYVRVSARFCQTKMIKEAVELFEFAMAGSISNTPTPHCCSLLLKKIVTAKKLDMDLFTRTLKAYTGNGNVVPDVMLQHVLKSLRSVDRFGQSNEVLKAMNEGGYVPSGDLQSVIASGLSRKGKKDEANELVNFMEASGNHLDDKAMASLVEGHCDAKDLEEASECFKKMIGKEGVSYAGYAFEKLVLAYCNSFQARDVYKLFSELVKQNQLKPWHSTYKIMVRNLLMKKVARDGGFEEALSLLPMMRNHGFPPFVDPFMDYLSNSGTSAEAFAFLKAVTSKKFPSNSMVLRVFEAMLKSARHSEAQDLLSMSPSYIRRNAEVLELFNTMKPEKCSLEKPLPAPAQIEA.

A mitochondrion-targeting transit peptide spans 1–37; it reads MRYQWRSLLFRSYRSSPRPFLSHHSRFQVISNSTRSF. PPR repeat units lie at residues 280–314, 315–349, 352–388, 389–423, 424–458, 459–493, 495–530, and 536–570; these read DEKT…GYEM, EMET…SISN, TPHC…GNVV, PDVM…GYVP, SGDL…GNHL, DDKA…EGVS, AGYA…QLKP, and KIMV…GFPP.

Belongs to the PPR family. P subfamily.

It is found in the mitochondrion. This is Pentatricopeptide repeat-containing protein At3g02490, mitochondrial from Arabidopsis thaliana (Mouse-ear cress).